Consider the following 241-residue polypeptide: ATP synthase subunit a (241 aa).

7 helical membrane-spanning segments follow: residues 29–49 (NSSL…LLGV), 86–106 (IPLV…GMLP), 114–134 (HVIV…IVGF), 144–164 (ILLP…IKLF), 177–197 (LAAN…FIMN), 200–220 (LILT…EVFV), and 221–241 (AILQ…DAVK).

It belongs to the ATPase A chain family. As to quaternary structure, F-type ATPases have 2 components, CF(1) - the catalytic core - and CF(0) - the membrane proton channel. CF(1) has five subunits: alpha(3), beta(3), gamma(1), delta(1), epsilon(1). CF(0) has three main subunits: a(1), b(2) and c(9-12). The alpha and beta chains form an alternating ring which encloses part of the gamma chain. CF(1) is attached to CF(0) by a central stalk formed by the gamma and epsilon chains, while a peripheral stalk is formed by the delta and b chains.

The protein localises to the cell membrane. Key component of the proton channel; it plays a direct role in the translocation of protons across the membrane. The polypeptide is ATP synthase subunit a (Wolbachia sp. subsp. Brugia malayi (strain TRS)).